The sequence spans 765 residues: Phosphoribosylformylglycinamidine synthase subunit PurL (765 aa).

Residue histidine 57 is part of the active site. ATP contacts are provided by tyrosine 60 and arginine 104. Glutamate 106 is a Mg(2+) binding site. Substrate is bound by residues 107–110 and arginine 129; that span reads SHNH. Histidine 108 serves as the catalytic Proton acceptor. Aspartate 130 contacts Mg(2+). Glutamine 254 contributes to the substrate binding site. Aspartate 282 provides a ligand contact to Mg(2+). Residue 326-328 coordinates substrate; sequence ESQ. Positions 508 and 545 each coordinate ATP. Position 546 (asparagine 546) interacts with Mg(2+). Serine 548 contacts substrate.

Belongs to the FGAMS family. As to quaternary structure, monomer. Part of the FGAM synthase complex composed of 1 PurL, 1 PurQ and 2 PurS subunits.

It is found in the cytoplasm. It carries out the reaction N(2)-formyl-N(1)-(5-phospho-beta-D-ribosyl)glycinamide + L-glutamine + ATP + H2O = 2-formamido-N(1)-(5-O-phospho-beta-D-ribosyl)acetamidine + L-glutamate + ADP + phosphate + H(+). It participates in purine metabolism; IMP biosynthesis via de novo pathway; 5-amino-1-(5-phospho-D-ribosyl)imidazole from N(2)-formyl-N(1)-(5-phospho-D-ribosyl)glycinamide: step 1/2. Its function is as follows. Part of the phosphoribosylformylglycinamidine synthase complex involved in the purines biosynthetic pathway. Catalyzes the ATP-dependent conversion of formylglycinamide ribonucleotide (FGAR) and glutamine to yield formylglycinamidine ribonucleotide (FGAM) and glutamate. The FGAM synthase complex is composed of three subunits. PurQ produces an ammonia molecule by converting glutamine to glutamate. PurL transfers the ammonia molecule to FGAR to form FGAM in an ATP-dependent manner. PurS interacts with PurQ and PurL and is thought to assist in the transfer of the ammonia molecule from PurQ to PurL. This is Phosphoribosylformylglycinamidine synthase subunit PurL from Corynebacterium aurimucosum (strain ATCC 700975 / DSM 44827 / CIP 107346 / CN-1) (Corynebacterium nigricans).